The chain runs to 213 residues: ABA-inducible protein PHV A1 (213 aa).

Disordered regions lie at residues 1-158 (MASN…KDKT) and 182-213 (NTLG…TRNH). Residues 13–23 (GETKARTEEKT) show a composition bias toward basic and acidic residues. LEA 11-mer repeat repeat units lie at residues 27–37 (MGATKQKAGQT), 38–48 (TEATKQKAGET), 49–59 (AEATKQKTGET), 60–70 (AEAAKQKAAEA), 78–88 (AQAAKDKTYET), 89–99 (AQAAKERAAQG), 111–121 (TEAAKQKAAET), 122–132 (TEAAKQKAAEA), and 133–143 (TEAAKQKASDT). Positions 27–143 (MGATKQKAGQ…EAAKQKASDT (117 aa)) are 11 X 11 AA tandem repeats of T-E-A-A-K-Q-K-A-A-E-T. Basic and acidic residues-rich tracts occupy residues 41–74 (TKQK…KDKT), 81–98 (AKDK…RAAQ), and 109–140 (EKTE…KQKA). Residues 193-213 (ATKDATTGATVKDTTTTTRNH) are compositionally biased toward low complexity.

Belongs to the LEA type 4 family.

In Hordeum vulgare (Barley), this protein is ABA-inducible protein PHV A1 (HVA1).